A 1044-amino-acid polypeptide reads, in one-letter code: Pre-mRNA-splicing factor ATP-dependent RNA helicase DEAH1 (1044 aa).

Residues 106 to 206 (EVVVEKKSSV…TLSKKEKEEA (101 aa)) are disordered. Residues 108 to 121 (VVEKKSSVSESRKS) show a composition bias toward basic and acidic residues. The segment covering 122–132 (DKGKKRFRKKS) has biased composition (basic residues). Phosphoserine is present on residues Ser135 and Ser138. The span at 157–166 (EEDDGSESEE) shows a compositional bias: acidic residues. Over residues 167–206 (ERVRDQKEREELEQHLKDRDTARTRKLTEQTLSKKEKEEA) the composition is skewed to basic and acidic residues. Residues 414 to 577 (LKAVEEHQVL…FDTAPIFSFP (164 aa)) form the Helicase ATP-binding domain. Residue 427 to 434 (GDTGSGKT) coordinates ATP. Residues 524–527 (DEAH) carry the DEAH box motif. A Helicase C-terminal domain is found at 600 to 775 (IVTILTIHVR…SVVLALKSLG (176 aa)).

The protein belongs to the DEAD box helicase family. DEAH subfamily. PRP2 sub-subfamily. In terms of tissue distribution, widely expressed.

The enzyme catalyses ATP + H2O = ADP + phosphate + H(+). Its function is as follows. Involved in pre-mRNA splicing. The polypeptide is Pre-mRNA-splicing factor ATP-dependent RNA helicase DEAH1 (Arabidopsis thaliana (Mouse-ear cress)).